A 242-amino-acid chain; its full sequence is UPF0157 protein PA4798 (242 aa).

The interval 215 to 242 (AGAESTPGGPADTAYFESLRSRVSKPQD) is disordered.

It belongs to the UPF0157 (GrpB) family.

In Pseudomonas aeruginosa (strain ATCC 15692 / DSM 22644 / CIP 104116 / JCM 14847 / LMG 12228 / 1C / PRS 101 / PAO1), this protein is UPF0157 protein PA4798.